Reading from the N-terminus, the 332-residue chain is MIPVINQEKQGISGDFRLSVAPMMNWTDRYCRVFHRVLAPSARLYTEMVHAKAVIYGDRERLLGFASVEQPVALQLGGSEPALLAKAASIAVDWGYSEINLNCGCPSDRVQAGSFGACLMREPALVADCVAAMAAVVSVPVTVKCRLGVNEDDDYGRFAKFVDWVIGASSSRMIVVHARNAWLQGLSPKENREIPPLRYDWVYRLKRECPELAVVLNGGITSVEAGLDHLLMVDGVMLGRAAYQDPYILHQFYCALSNAPVLPRALLLRALRPYVEAWLEQGVTLRHIVRHLLGLFHGQPGGRVFRQVLTQGGQRSDADWSLVEQALSIIEG.

Residues 22–24 (PMM) and Q75 each bind FMN. Residue C105 is the Proton donor of the active site. FMN contacts are provided by residues K144, H177, 217–219 (NGG), and 239–240 (GR).

It belongs to the Dus family. DusA subfamily. FMN serves as cofactor.

It catalyses the reaction 5,6-dihydrouridine(20) in tRNA + NADP(+) = uridine(20) in tRNA + NADPH + H(+). The catalysed reaction is 5,6-dihydrouridine(20) in tRNA + NAD(+) = uridine(20) in tRNA + NADH + H(+). It carries out the reaction 5,6-dihydrouridine(20a) in tRNA + NADP(+) = uridine(20a) in tRNA + NADPH + H(+). The enzyme catalyses 5,6-dihydrouridine(20a) in tRNA + NAD(+) = uridine(20a) in tRNA + NADH + H(+). Catalyzes the synthesis of 5,6-dihydrouridine (D), a modified base found in the D-loop of most tRNAs, via the reduction of the C5-C6 double bond in target uridines. Specifically modifies U20 and U20a in tRNAs. In Xylella fastidiosa (strain Temecula1 / ATCC 700964), this protein is tRNA-dihydrouridine(20/20a) synthase.